The primary structure comprises 438 residues: Fumarate hydratase class II (438 aa).

Substrate-binding positions include 76–78 (SGT), 101–104 (HPND), 111–113 (SSN), and T159. H160 acts as the Proton donor/acceptor in catalysis. S291 is a catalytic residue. Residues S292 and 297 to 299 (KTN) each bind substrate.

This sequence belongs to the class-II fumarase/aspartase family. Fumarase subfamily. In terms of assembly, homotetramer.

It is found in the cytoplasm. The catalysed reaction is (S)-malate = fumarate + H2O. It participates in carbohydrate metabolism; tricarboxylic acid cycle; (S)-malate from fumarate: step 1/1. Its function is as follows. Involved in the TCA cycle. Catalyzes the stereospecific interconversion of fumarate to L-malate. The polypeptide is Fumarate hydratase class II (Saccharolobus solfataricus (strain ATCC 35092 / DSM 1617 / JCM 11322 / P2) (Sulfolobus solfataricus)).